The sequence spans 157 residues: Nascent polypeptide-associated complex subunit beta (157 aa).

Positions 1 to 31 (MPVDPEKLAKLQKSTAKKVGGSRVKAKKGVK) are disordered. The NAC-A/B domain occupies 33-98 (EQDDTKLIET…PQEKNITQLI (66 aa)). Residues 125–157 (NPKDFGAAGEAGATEEANEDIPDLVDQKFDDVE) are disordered. The segment covering 130 to 139 (GAAGEAGATE) has biased composition (low complexity).

This sequence belongs to the NAC-beta family. Part of the nascent polypeptide-associated complex (NAC), consisting of EGD2 and EGD1. NAC associates with ribosomes via EGD1.

It localises to the cytoplasm. The protein localises to the nucleus. Functionally, component of the nascent polypeptide-associated complex (NAC), a dynamic component of the ribosomal exit tunnel, protecting the emerging polypeptides from interaction with other cytoplasmic proteins to ensure appropriate nascent protein targeting. The NAC complex also promotes mitochondrial protein import by enhancing productive ribosome interactions with the outer mitochondrial membrane and blocks the inappropriate interaction of ribosomes translating non-secretory nascent polypeptides with translocation sites in the membrane of the endoplasmic reticulum. EGD1 may act as a transcription factor that exert a negative effect on the expression of several genes that are transcribed by RNA polymerase II. The polypeptide is Nascent polypeptide-associated complex subunit beta (EGD1) (Lodderomyces elongisporus (strain ATCC 11503 / CBS 2605 / JCM 1781 / NBRC 1676 / NRRL YB-4239) (Yeast)).